The following is a 322-amino-acid chain: Acetyl-coenzyme A carboxylase carboxyl transferase subunit alpha 2 (322 aa).

The 258-residue stretch at 37 to 294 (EINRLSARSE…KRVLQESLRN (258 aa)) folds into the CoA carboxyltransferase C-terminal domain.

It belongs to the AccA family. In terms of assembly, acetyl-CoA carboxylase is a heterohexamer composed of biotin carboxyl carrier protein (AccB), biotin carboxylase (AccC) and two subunits each of ACCase subunit alpha (AccA) and ACCase subunit beta (AccD).

The protein localises to the cytoplasm. The enzyme catalyses N(6)-carboxybiotinyl-L-lysyl-[protein] + acetyl-CoA = N(6)-biotinyl-L-lysyl-[protein] + malonyl-CoA. Its pathway is lipid metabolism; malonyl-CoA biosynthesis; malonyl-CoA from acetyl-CoA: step 1/1. Functionally, component of the acetyl coenzyme A carboxylase (ACC) complex. First, biotin carboxylase catalyzes the carboxylation of biotin on its carrier protein (BCCP) and then the CO(2) group is transferred by the carboxyltransferase to acetyl-CoA to form malonyl-CoA. Its function is as follows. Confers resistance to the endogenous polyketide antibiotic thailandamide. Can replace the endogenous gene in S.typhimurium, conferring slow growth and resistance to thailandamide. Can also replace the endogenous gene in E.coli, conferring resistance to thailandamide. This is Acetyl-coenzyme A carboxylase carboxyl transferase subunit alpha 2 from Burkholderia thailandensis (strain ATCC 700388 / DSM 13276 / CCUG 48851 / CIP 106301 / E264).